We begin with the raw amino-acid sequence, 410 residues long: Secreted protein PRY1 (410 aa).

Positions Met1 to Ser20 are cleaved as a signal peptide. 3 disordered regions span residues Pro64–Ser86, Ser102–Ser132, and Ser148–Ser260. Positions Ser148–Pro179 are enriched in low complexity. Positions Ser197–Ser211 are enriched in gly residues. Residues Gly212–Ser260 are compositionally biased toward low complexity. Positions Leu283–Tyr394 constitute an SCP domain.

The protein belongs to the CRISP family.

It is found in the secreted. Functionally, secreted protein that acts as a virulence factor during infections. This Candida albicans (strain SC5314 / ATCC MYA-2876) (Yeast) protein is Secreted protein PRY1 (PRY1).